Consider the following 960-residue polypeptide: Probable RNA-binding protein 19 (960 aa).

The RRM 1 domain maps to 2-79; the sequence is SRLIVKNLPN…SRITVEFCKS (78 aa). Disordered stretches follow at residues 85 to 119 and 149 to 294; these read KPRA…KKKK and WAND…TTCH. 3 positions are modified to phosphoserine: S174, S176, and S180. The segment covering 176–194 has biased composition (acidic residues); the sequence is SGQESEEEGAGEDLEEEAS. A compositionally biased stretch (basic and acidic residues) spans 273 to 286; that stretch reads RPPEARAETEKPAN. RRM domains follow at residues 294 to 369 and 402 to 480; these read HTVK…REKN and GRLF…PSTI. K481 participates in a covalent cross-link: Glycyl lysine isopeptide (Lys-Gly) (interchain with G-Cter in SUMO2). The segment at 491-513 is disordered; the sequence is LGSSSYKKKKEAQDKANSASSHN. Residues 587-659 enclose the RRM 4 domain; sequence TVILVKNLPA…VPLYLEWAPV (73 aa). A disordered region spans residues 667 to 729; it reads PQKKKLQDTP…EEEEEESLPG (63 aa). 2 stretches are compositionally biased toward acidic residues: residues 689 to 706 and 714 to 726; these read TVPD…EEGA and EEEE…EEES. 2 consecutive RRM domains span residues 730-811 and 832-912; these read CTLF…ISER and SKIL…WADS. S936, S949, and S951 each carry phosphoserine.

Belongs to the RRM MRD1 family. In terms of tissue distribution, expressed in the crypts of Lieberkuhn of the intestine and in intestinal neoplasia (at protein level).

The protein localises to the nucleus. It is found in the nucleolus. The protein resides in the nucleoplasm. It localises to the cytoplasm. Its subcellular location is the chromosome. In terms of biological role, plays a role in embryo pre-implantation development. In Homo sapiens (Human), this protein is Probable RNA-binding protein 19 (RBM19).